Consider the following 306-residue polypeptide: Mediator of RNA polymerase II transcription subunit 30 (306 aa).

2 disordered regions span residues 1-22 (MSGQ…FNSP) and 51-148 (QQQM…STQA). Residues 51-128 (QQQMQSGGVQ…VSSAAQSATG (78 aa)) show a composition bias toward low complexity.

The protein belongs to the Mediator complex subunit 30 family. In terms of assembly, component of the Mediator complex.

The protein localises to the nucleus. Its function is as follows. Component of the Mediator complex, a coactivator involved in the regulated transcription of nearly all RNA polymerase II-dependent genes. Mediator functions as a bridge to convey information from gene-specific regulatory proteins to the basal RNA polymerase II transcription machinery. Mediator is recruited to promoters by direct interactions with regulatory proteins and serves as a scaffold for the assembly of a functional preinitiation complex with RNA polymerase II and the general transcription factors. The polypeptide is Mediator of RNA polymerase II transcription subunit 30 (MED30) (Aedes aegypti (Yellowfever mosquito)).